A 198-amino-acid polypeptide reads, in one-letter code: Putative manganese efflux pump MntP (198 aa).

The next 6 helical transmembrane spans lie at 3 to 23, 37 to 57, 65 to 85, 105 to 127, 131 to 153, and 171 to 191; these read SIEL…VAIC, VLTG…GYLL, ITSI…INMI, SLTV…FAFL, IIPA…VKIG, and ILIG…SFVF.

Belongs to the MntP (TC 9.B.29) family.

It is found in the cell membrane. In terms of biological role, probably functions as a manganese efflux pump. In Acetivibrio thermocellus (strain ATCC 27405 / DSM 1237 / JCM 9322 / NBRC 103400 / NCIMB 10682 / NRRL B-4536 / VPI 7372) (Clostridium thermocellum), this protein is Putative manganese efflux pump MntP.